The chain runs to 147 residues: uncharacterized protein (147 aa).

The HTH marR-type domain occupies 11-147 (NTSPGFLLWQ…SGLQELLKHE (137 aa)). The segment at residues 61-84 (QKKLASFSQTNIMMVSEVVRTLEK) is a DNA-binding region (H-T-H motif).

This is an uncharacterized protein from Bacillus subtilis (strain 168).